The primary structure comprises 37 residues: Large ribosomal subunit protein bL36 (37 aa).

The protein belongs to the bacterial ribosomal protein bL36 family.

This is Large ribosomal subunit protein bL36 from Paracidovorax citrulli (strain AAC00-1) (Acidovorax citrulli).